Reading from the N-terminus, the 331-residue chain is Flavonol synthase 1 (331 aa).

The region spanning 191-292 (DAIELLLKIN…RMSWPVFCSP (102 aa)) is the Fe2OG dioxygenase domain. Fe cation is bound by residues H217, D219, and H273. 2-oxoglutarate is bound at residue R283.

It belongs to the iron/ascorbate-dependent oxidoreductase family. Requires L-ascorbate as cofactor. The cofactor is Fe(2+). Expressed in young cromes.

The catalysed reaction is a (2R,3R)-dihydroflavonol + 2-oxoglutarate + O2 = a flavonol + succinate + CO2 + H2O. It carries out the reaction (2R,3R)-dihydrokaempferol + 2-oxoglutarate + O2 = kaempferol + succinate + CO2 + H2O + H(+). It catalyses the reaction (2R,3R)-dihydroquercetin + 2-oxoglutarate + O2 = quercetin + succinate + CO2 + H2O + H(+). The enzyme catalyses (2R,3R)-dihydromyricetin + 2-oxoglutarate + O2 = myricetin + succinate + CO2 + H2O + H(+). Its pathway is flavonoid metabolism. Functionally, catalyzes the formation of flavonols from dihydroflavonols. Can act on dihydrokaempferol to produce kaempferol, on dihydroquercetin to produce quercitin and on dihydromyricetin to produce myricetin. The chain is Flavonol synthase 1 from Crocosmia x crocosmiiflora (Montbretia).